The following is a 760-amino-acid chain: Semaphorin-4A (760 aa).

The N-terminal stretch at Met-1 to Gly-32 is a signal peptide. Topologically, residues Thr-33–His-682 are extracellular. One can recognise a Sema domain in the interval Gln-36–Arg-494. A disulfide bridge connects residues Cys-113 and Cys-124. N-linked (GlcNAc...) asparagine glycans are attached at residues Asn-120 and Asn-135. 3 cysteine pairs are disulfide-bonded: Cys-142-Cys-151, Cys-269-Cys-379, and Cys-293-Cys-339. The N-linked (GlcNAc...) asparagine glycan is linked to Asn-496. The PSI domain maps to Asn-496–Thr-547. Intrachain disulfides connect Cys-497/Cys-514, Cys-506/Cys-523, and Cys-579/Cys-623. The 59-residue stretch at Asn-572–Tyr-630 folds into the Ig-like C2-type domain. The N-linked (GlcNAc...) asparagine glycan is linked to Asn-606. A helical membrane pass occupies residues Phe-683–Ala-703. Residues Ser-704 to Ala-760 are Cytoplasmic-facing. Positions Met-720–Ala-760 are disordered. A compositionally biased stretch (basic and acidic residues) spans Pro-723–Ser-744.

The protein belongs to the semaphorin family. As to quaternary structure, interacts with PLXNB1, PLXNB2 and PLXNB3. Interacts with PLXND1. Interacts with TIMD2. In terms of tissue distribution, expressed in neurons and glia in the developing hippocampus.

It localises to the cell membrane. Cell surface receptor for PLXNB1, PLXNB2, PLXNB3 and PLXND1 that plays an important role in cell-cell signaling. Regulates glutamatergic and GABAergic synapse development. Promotes the development of inhibitory synapses in a PLXNB1-dependent manner and promotes the development of excitatory synapses in a PLXNB2-dependent manner. Plays a role in priming antigen-specific T-cells, promotes differentiation of Th1 T-helper cells, and thereby contributes to adaptive immunity. Promotes phosphorylation of TIMD2. Inhibits angiogenesis. Promotes axon growth cone collapse. Inhibits axonal extension by providing local signals to specify territories inaccessible for growing axons. The protein is Semaphorin-4A (Sema4a) of Mus musculus (Mouse).